A 393-amino-acid polypeptide reads, in one-letter code: 4-hydroxyphenylpyruvate dioxygenase (393 aa).

N-acetylthreonine is present on T2. VOC domains are found at residues 18–152 (HFHS…KMTF) and 180–338 (IIDH…IFTK). Residue H183 coordinates Fe cation. S211, S226, and S250 each carry phosphoserine. Fe cation contacts are provided by H266 and E349.

This sequence belongs to the 4HPPD family. As to quaternary structure, homodimer. The cofactor is Fe cation. As to expression, liver.

The protein resides in the cytoplasm. It is found in the endoplasmic reticulum membrane. Its subcellular location is the golgi apparatus membrane. It catalyses the reaction 3-(4-hydroxyphenyl)pyruvate + O2 = homogentisate + CO2. It functions in the pathway amino-acid degradation; L-phenylalanine degradation; acetoacetate and fumarate from L-phenylalanine: step 3/6. Catalyzes the conversion of 4-hydroxyphenylpyruvic acid to homogentisic acid, one of the steps in tyrosine catabolism. The chain is 4-hydroxyphenylpyruvate dioxygenase (HPD) from Sus scrofa (Pig).